A 183-amino-acid polypeptide reads, in one-letter code: Large ribosomal subunit protein uL5 (183 aa).

It belongs to the universal ribosomal protein uL5 family. Part of the 50S ribosomal subunit; part of the 5S rRNA/L5/L18/L25 subcomplex. Contacts the 5S rRNA and the P site tRNA. Forms a bridge to the 30S subunit in the 70S ribosome.

In terms of biological role, this is one of the proteins that bind and probably mediate the attachment of the 5S RNA into the large ribosomal subunit, where it forms part of the central protuberance. In the 70S ribosome it contacts protein S13 of the 30S subunit (bridge B1b), connecting the 2 subunits; this bridge is implicated in subunit movement. Contacts the P site tRNA; the 5S rRNA and some of its associated proteins might help stabilize positioning of ribosome-bound tRNAs. The protein is Large ribosomal subunit protein uL5 of Fusobacterium nucleatum subsp. nucleatum (strain ATCC 25586 / DSM 15643 / BCRC 10681 / CIP 101130 / JCM 8532 / KCTC 2640 / LMG 13131 / VPI 4355).